An 82-amino-acid chain; its full sequence is UPF0180 protein BT9727_1277 (82 aa).

This sequence belongs to the UPF0180 family.

In Bacillus thuringiensis subsp. konkukian (strain 97-27), this protein is UPF0180 protein BT9727_1277.